The following is a 471-amino-acid chain: Glutamate--tRNA ligase (471 aa).

Positions 9 to 19 (PSPTGYLHVGG) match the 'HIGH' region motif. C98, C100, C125, and H127 together coordinate Zn(2+). The 'KMSKS' region motif lies at 237 to 241 (KLSKR). An ATP-binding site is contributed by K240.

Belongs to the class-I aminoacyl-tRNA synthetase family. Glutamate--tRNA ligase type 1 subfamily. Monomer. Requires Zn(2+) as cofactor.

The protein localises to the cytoplasm. It catalyses the reaction tRNA(Glu) + L-glutamate + ATP = L-glutamyl-tRNA(Glu) + AMP + diphosphate. In terms of biological role, catalyzes the attachment of glutamate to tRNA(Glu) in a two-step reaction: glutamate is first activated by ATP to form Glu-AMP and then transferred to the acceptor end of tRNA(Glu). In Salmonella dublin (strain CT_02021853), this protein is Glutamate--tRNA ligase.